Consider the following 453-residue polypeptide: MSNEVSIKELIEKAKVAQKKLEAYSQEQVDVLVKALGKVVYDNAEMFAKEAVEETEMGVYEDKVAKCHLKSGAIWNHIKDKKTVGIIKEEPERALVYVAKPKGVVAATTPITNPVVTPMCNAMAAIKGRNTIIVAPHPKAKKVSAHTVELMNAELKKLGAPENIIQIVEAPSREAAKELMESADVVIATGGAGRVKAAYSSGRPAYGVGPGNSQVIVDKGYDYNKAAQDIITGRKYDNGIICSSEQSVIAPAEDYDKVIAAFVENGAFYVEDEETVEKFRSTLFKDGKINSKIIGKSVQIIADLAGVKVPEGTKVIVLKGKGAGEKDVLCKEKMCPVLVALKYDTFEEAVEIAMANYMYEGAGHTAGIHSDNDENIRYAGTVLPISRLVVNQPATTAGGSFNNGFNPTTTLGCGSWGRNSISENLTYEHLINVSRIGYFNKEAKVPSYEEIWG.

188–193 (ATGGAG) is a binding site for NADP(+). Residue Cys242 is part of the active site.

In terms of assembly, homodimer.

The enzyme catalyses succinate semialdehyde + NADP(+) + CoA = succinyl-CoA + NADPH + H(+). Functionally, catalyzes the reduction of succinate semialdehyde to succinyl-CoA. The enzyme is specific for succinate semialdehyde and succinyl-CoA, and only shows low activity with palmitoyl-CoA. There is no activity with NAD(+) as cosubstrate. In Clostridium kluyveri (strain ATCC 8527 / DSM 555 / NBRC 12016 / NCIMB 10680 / K1), this protein is Succinate-semialdehyde dehydrogenase (acetylating) (sucD).